The following is a 283-amino-acid chain: Pantothenate synthetase (283 aa).

Residue 26–33 participates in ATP binding; sequence MGNLHEGH. Residue histidine 33 is the Proton donor of the active site. (R)-pantoate is bound at residue glutamine 57. A beta-alanine-binding site is contributed by glutamine 57. 144–147 lines the ATP pocket; that stretch reads GKKD. Glutamine 150 provides a ligand contact to (R)-pantoate. Residue 181-184 coordinates ATP; that stretch reads LSSR.

It belongs to the pantothenate synthetase family. In terms of assembly, homodimer.

The protein localises to the cytoplasm. The catalysed reaction is (R)-pantoate + beta-alanine + ATP = (R)-pantothenate + AMP + diphosphate + H(+). Its pathway is cofactor biosynthesis; (R)-pantothenate biosynthesis; (R)-pantothenate from (R)-pantoate and beta-alanine: step 1/1. Catalyzes the condensation of pantoate with beta-alanine in an ATP-dependent reaction via a pantoyl-adenylate intermediate. The sequence is that of Pantothenate synthetase from Variovorax paradoxus (strain S110).